We begin with the raw amino-acid sequence, 210 residues long: Thymidylate kinase (210 aa).

Residue 10 to 17 (GPEGAGKS) coordinates ATP.

This sequence belongs to the thymidylate kinase family.

The enzyme catalyses dTMP + ATP = dTDP + ADP. Functionally, phosphorylation of dTMP to form dTDP in both de novo and salvage pathways of dTTP synthesis. This chain is Thymidylate kinase, found in Pseudomonas savastanoi pv. phaseolicola (strain 1448A / Race 6) (Pseudomonas syringae pv. phaseolicola (strain 1448A / Race 6)).